The chain runs to 415 residues: Hydroxysteroid dehydrogenase-like protein 2 (415 aa).

NADP(+)-binding positions include glycine 17 to glycine 23, lysine 42, and aspartate 74. Tyrosine 168 (proton acceptor) is an active-site residue. Lysine 172 provides a ligand contact to NADP(+). The region spanning alanine 304–lysine 412 is the SCP2 domain.

Belongs to the short-chain dehydrogenases/reductases (SDR) family.

The protein resides in the peroxisome. It localises to the mitochondrion. Its function is as follows. Has apparently no steroid dehydrogenase activity. Might act as a metabolic regulator that affects systemic adaptation to nutritional cues. This chain is Hydroxysteroid dehydrogenase-like protein 2 (hsdl2), found in Danio rerio (Zebrafish).